Consider the following 150-residue polypeptide: Putative biopolymer transport protein ExbB-like 2 (150 aa).

Transmembrane regions (helical) follow at residues 5-25, 63-83, and 97-117; these read VDYG…AIAI, APYI…MDLG, and LALA…AIVI.

It belongs to the ExbB/TolQ family.

It localises to the cell inner membrane. The chain is Putative biopolymer transport protein ExbB-like 2 from Helicobacter pylori (strain J99 / ATCC 700824) (Campylobacter pylori J99).